The primary structure comprises 831 residues: Pleckstrin homology-like domain family B member 1 (831 aa).

Positions 1 to 11 are enriched in basic residues; sequence LTLGARGRRTR. The disordered stretch occupies residues 1-73; it reads LTLGARGRRT…PIPRERKNSI (73 aa). R6 is subject to Omega-N-methylarginine. 2 positions are modified to phosphoserine: S12 and S14. The residue at position 16 (T16) is a Phosphothreonine. Residues S27, S33, S45, S49, S57, S72, S77, and S175 each carry the phosphoserine modification. The span at 39-51 shows a compositional bias: polar residues; the sequence is GSLTGASPRQSPH. Disordered stretches follow at residues 160–209 and 416–465; these read RSGE…LQGE and NGDM…QNGT. The segment covering 174–188 has biased composition (basic and acidic residues); sequence ESMERSDEENLKEEC. Residues 180-306 are a coiled coil; it reads DEENLKEECS…TETKLFEDLE (127 aa). Phosphoserine occurs at positions 421 and 467. Low complexity predominate over residues 421–442; the sequence is SPLPRTRSGPLPSSSGSSSSSS. Positions 584–603 are disordered; the sequence is SMETSISTGGNSACSPDNMS. Residues 610–676 adopt a coiled-coil conformation; that stretch reads MGKIEEMEKM…QQLVEKEVKL (67 aa). In terms of domain architecture, PH spans 721 to 824; sequence SKVCRGYLIK…WMDVIVTGAE (104 aa).

This is Pleckstrin homology-like domain family B member 1 (Phldb1) from Rattus norvegicus (Rat).